The chain runs to 298 residues: Small ribosomal subunit protein uS2 (298 aa).

Basic and acidic residues-rich tracts occupy residues 237–259 and 280–298; these read QSKE…DGQK and PKSE…ENKG. The segment at 237-298 is disordered; sequence QSKELDDKAD…DAAKLPENKG (62 aa).

Belongs to the universal ribosomal protein uS2 family.

This Neorickettsia sennetsu (strain ATCC VR-367 / Miyayama) (Ehrlichia sennetsu) protein is Small ribosomal subunit protein uS2.